The primary structure comprises 393 residues: MTISQRTAAILVAAGRGLRAGTGGPKQYRAIGGRTVIHRALAAFSEHPDVAVVQPVVNPDDIDVFNAAVSGLRHEVPAHGGATRQASVLAGLEALVPHRPDIVLIHDAARPFVTSAVISRAIQAAGKTGAAIPVVPVTDTIKEVTASGDIIATPERAKLRIAQTPQTFKFEVILEAHRRAARDGLTEFTDDAAIAEWAGLTVATFEGDVANMKLTTPEDFVREEARLAAQLGDIRTGTGYDVHAFGEGDHVWLCGLRVPHSKGFLAHSDGDVGLHALVDAILGALADGDIGSHFPPSDMKWKGASSDQFLKYAIERVTARGGRVANLEVTMICERPKIGPLRDQMRARIAEISGVDISRIAVKATTSERLGFTGREEGIAATASATIRLPWSA.

The segment at 1–234 (MTISQRTAAI…ARLAAQLGDI (234 aa)) is 2-C-methyl-D-erythritol 4-phosphate cytidylyltransferase. The segment at 235–393 (RTGTGYDVHA…SATIRLPWSA (159 aa)) is 2-C-methyl-D-erythritol 2,4-cyclodiphosphate synthase. Residues aspartate 241 and histidine 243 each coordinate a divalent metal cation. Residues 241 to 243 (DVH) and 267 to 268 (HS) each bind 4-CDP-2-C-methyl-D-erythritol 2-phosphate. Residue histidine 275 coordinates a divalent metal cation. Residues 289 to 291 (DIG), 365 to 368 (TTSE), phenylalanine 372, and arginine 375 contribute to the 4-CDP-2-C-methyl-D-erythritol 2-phosphate site.

It in the N-terminal section; belongs to the IspD/TarI cytidylyltransferase family. IspD subfamily. In the C-terminal section; belongs to the IspF family. A divalent metal cation serves as cofactor.

The catalysed reaction is 2-C-methyl-D-erythritol 4-phosphate + CTP + H(+) = 4-CDP-2-C-methyl-D-erythritol + diphosphate. It carries out the reaction 4-CDP-2-C-methyl-D-erythritol 2-phosphate = 2-C-methyl-D-erythritol 2,4-cyclic diphosphate + CMP. Its pathway is isoprenoid biosynthesis; isopentenyl diphosphate biosynthesis via DXP pathway; isopentenyl diphosphate from 1-deoxy-D-xylulose 5-phosphate: step 2/6. The protein operates within isoprenoid biosynthesis; isopentenyl diphosphate biosynthesis via DXP pathway; isopentenyl diphosphate from 1-deoxy-D-xylulose 5-phosphate: step 4/6. In terms of biological role, bifunctional enzyme that catalyzes the formation of 4-diphosphocytidyl-2-C-methyl-D-erythritol from CTP and 2-C-methyl-D-erythritol 4-phosphate (MEP) (IspD), and catalyzes the conversion of 4-diphosphocytidyl-2-C-methyl-D-erythritol 2-phosphate (CDP-ME2P) to 2-C-methyl-D-erythritol 2,4-cyclodiphosphate (ME-CPP) with a corresponding release of cytidine 5-monophosphate (CMP) (IspF). The sequence is that of Bifunctional enzyme IspD/IspF from Bradyrhizobium sp. (strain BTAi1 / ATCC BAA-1182).